The chain runs to 411 residues: CinA-like protein (411 aa).

This sequence belongs to the CinA family.

This chain is CinA-like protein, found in Dictyoglomus thermophilum (strain ATCC 35947 / DSM 3960 / H-6-12).